The chain runs to 709 residues: Bud site selection protein 14 (709 aa).

The residue at position 2 (Ser2) is an N-acetylserine. A disordered region spans residues 61 to 258 (DIINNRPTSG…DYQPLSPPRE (198 aa)). Composition is skewed to polar residues over residues 62-74 (IINN…SKLT) and 89-107 (VTPT…NILS). Composition is skewed to basic and acidic residues over residues 111-123 (EKGH…RDDD) and 131-150 (VEKH…KENS). A Phosphotyrosine modification is found at Tyr159. Ser160 and Ser162 each carry phosphoserine. Thr177 is subject to Phosphothreonine. Phosphoserine occurs at positions 212 and 222. The span at 212–226 (SEDEDEEENYSDDDD) shows a compositional bias: acidic residues. An SH3 domain is found at 259-320 (LDPDKLYALY…PAEILETFPE (62 aa)). Residues 334-367 (SSQSVASSDSKDDSISSGNKNQSDAESIIPTPAL) form a disordered region. Residues Ser376, Ser378, and Ser401 each carry the phosphoserine modification. Residues 396-406 (DTSLDSNDDGG) are compositionally biased toward acidic residues. Disordered stretches follow at residues 396-421 (DTSL…DNDK), 464-510 (NVKK…SDYD), 525-571 (ANGM…SSRA), and 600-680 (ASLG…PASK). The span at 470 to 504 (RQDNKNESEPKTSSSKDREDDYNANRYVGQEKSEP) shows a compositional bias: basic and acidic residues. Ser507 is modified (phosphoserine). Positions 531 to 552 (SDSQNSLSTIGEFSPSSSEWTN) are enriched in polar residues. Residues 553-569 (ESPSTPIVEESSSIPSS) show a composition bias toward low complexity. The span at 600-614 (ASLGSSGGMANQTDA) shows a compositional bias: polar residues. Residues 615–633 (EQPKEELEKHHSTPEEEKQ) show a composition bias toward basic and acidic residues. Phosphoserine occurs at positions 655, 658, and 670. Over residues 655 to 671 (SSASINSSLSGSRALSN) the composition is skewed to low complexity.

As to quaternary structure, interacts with GLC7.

Functionally, important for bud site selection. Seems to be a regulatory subunit of the BUD14-GLC7 type-I phosphatase complex. The BUD14-GLC7 complex is necessary to regulate microtubule dynamics at the cortex and may function as a specific activator of the dynein complex. The sequence is that of Bud site selection protein 14 (BUD14) from Saccharomyces cerevisiae (strain ATCC 204508 / S288c) (Baker's yeast).